Consider the following 265-residue polypeptide: Tryptophan synthase alpha chain (265 aa).

Active-site proton acceptor residues include Glu-49 and Asp-60.

Belongs to the TrpA family. In terms of assembly, tetramer of two alpha and two beta chains.

It carries out the reaction (1S,2R)-1-C-(indol-3-yl)glycerol 3-phosphate + L-serine = D-glyceraldehyde 3-phosphate + L-tryptophan + H2O. It functions in the pathway amino-acid biosynthesis; L-tryptophan biosynthesis; L-tryptophan from chorismate: step 5/5. Functionally, the alpha subunit is responsible for the aldol cleavage of indoleglycerol phosphate to indole and glyceraldehyde 3-phosphate. This chain is Tryptophan synthase alpha chain, found in Cupriavidus metallidurans (strain ATCC 43123 / DSM 2839 / NBRC 102507 / CH34) (Ralstonia metallidurans).